The chain runs to 280 residues: Ribosomal RNA small subunit methyltransferase A (280 aa).

N30, V32, G57, E78, D108, and N125 together coordinate S-adenosyl-L-methionine.

It belongs to the class I-like SAM-binding methyltransferase superfamily. rRNA adenine N(6)-methyltransferase family. RsmA subfamily.

It is found in the cytoplasm. It carries out the reaction adenosine(1518)/adenosine(1519) in 16S rRNA + 4 S-adenosyl-L-methionine = N(6)-dimethyladenosine(1518)/N(6)-dimethyladenosine(1519) in 16S rRNA + 4 S-adenosyl-L-homocysteine + 4 H(+). Functionally, specifically dimethylates two adjacent adenosines (A1518 and A1519) in the loop of a conserved hairpin near the 3'-end of 16S rRNA in the 30S particle. May play a critical role in biogenesis of 30S subunits. The sequence is that of Ribosomal RNA small subunit methyltransferase A from Leifsonia xyli subsp. xyli (strain CTCB07).